The sequence spans 121 residues: Large ribosomal subunit protein bL20 (121 aa).

Belongs to the bacterial ribosomal protein bL20 family.

Its function is as follows. Binds directly to 23S ribosomal RNA and is necessary for the in vitro assembly process of the 50S ribosomal subunit. It is not involved in the protein synthesizing functions of that subunit. The polypeptide is Large ribosomal subunit protein bL20 (Ruegeria pomeroyi (strain ATCC 700808 / DSM 15171 / DSS-3) (Silicibacter pomeroyi)).